A 131-amino-acid chain; its full sequence is Insulin-like 3 (131 aa).

Positions Met1 to Ala24 are cleaved as a signal peptide. Intrachain disulfides connect Cys34–Cys117, Cys46–Cys130, and Cys116–Cys121. A propeptide spans Pro58–His104 (c peptide like). The segment at Ala86–Arg105 is disordered.

The protein belongs to the insulin family. In terms of assembly, heterodimer of a B chain and an A chain linked by two disulfide bonds. In terms of tissue distribution, highest expression in the Leydig cells of the testis.

It is found in the secreted. Functionally, seems to play a role in testicular function. May be a trophic hormone with a role in testicular descent in fetal life. Is a ligand for LGR8 receptor. In Callithrix jacchus (White-tufted-ear marmoset), this protein is Insulin-like 3 (INSL3).